The following is a 301-amino-acid chain: MKQRTIAKNVDIVGIGLHKGVPVKMRLEPLDSDMGIIFYRSDAGVTIPVKKEFVVDTKMATVIGKDGVVISTIEHLLSAIYAYGIDNLRIVLDNDEVPVLDGSSAGYCMLIEEAGIKELEKSKKAIKIKKEIEITTEDGKRVTLKPSDRIVYDFEINFEHPAIGKQKFHFDYSIEEYKNNISRARTFGFLHEVQYLRSIGLAQGGSMENAIVLDKTKVLNPEGLRFDDEFVRHKILDAIGDMALLEYTLVGEYDAVAGSHHLNHLLTKKLYEDEANYEIIDLEEASSEASVFEMAYSKVES.

The Zn(2+) site is built by H75, H233, and D237. H260 functions as the Proton donor in the catalytic mechanism.

The protein belongs to the LpxC family. Requires Zn(2+) as cofactor.

The enzyme catalyses a UDP-3-O-[(3R)-3-hydroxyacyl]-N-acetyl-alpha-D-glucosamine + H2O = a UDP-3-O-[(3R)-3-hydroxyacyl]-alpha-D-glucosamine + acetate. The protein operates within glycolipid biosynthesis; lipid IV(A) biosynthesis; lipid IV(A) from (3R)-3-hydroxytetradecanoyl-[acyl-carrier-protein] and UDP-N-acetyl-alpha-D-glucosamine: step 2/6. Catalyzes the hydrolysis of UDP-3-O-myristoyl-N-acetylglucosamine to form UDP-3-O-myristoylglucosamine and acetate, the committed step in lipid A biosynthesis. This Aliarcobacter butzleri (strain RM4018) (Arcobacter butzleri) protein is UDP-3-O-acyl-N-acetylglucosamine deacetylase.